Here is a 57-residue protein sequence, read N- to C-terminus: Large ribosomal subunit protein bL32c (57 aa).

Component of the chloroplast large ribosomal subunit (LSU). Mature 70S chloroplast ribosomes of higher plants consist of a small (30S) and a large (50S) subunit. The 30S small subunit contains 1 molecule of ribosomal RNA (16S rRNA) and 24 different proteins. The 50S large subunit contains 3 rRNA molecules (23S, 5S and 4.5S rRNA) and 33 different proteins.

The protein resides in the plastid. Its subcellular location is the chloroplast. Its function is as follows. Component of the chloroplast ribosome (chloro-ribosome), a dedicated translation machinery responsible for the synthesis of chloroplast genome-encoded proteins, including proteins of the transcription and translation machinery and components of the photosynthetic apparatus. This chain is Large ribosomal subunit protein bL32c (rpl32), found in Spinacia oleracea (Spinach).